The primary structure comprises 354 residues: Chorismate synthase (354 aa).

Arg46 contacts NADP(+). FMN-binding positions include 123-125 (RSS), 239-240 (NA), Gly284, 299-303 (KPVAT), and Arg325.

The protein belongs to the chorismate synthase family. As to quaternary structure, homotetramer. It depends on FMNH2 as a cofactor.

It catalyses the reaction 5-O-(1-carboxyvinyl)-3-phosphoshikimate = chorismate + phosphate. The protein operates within metabolic intermediate biosynthesis; chorismate biosynthesis; chorismate from D-erythrose 4-phosphate and phosphoenolpyruvate: step 7/7. In terms of biological role, catalyzes the anti-1,4-elimination of the C-3 phosphate and the C-6 proR hydrogen from 5-enolpyruvylshikimate-3-phosphate (EPSP) to yield chorismate, which is the branch point compound that serves as the starting substrate for the three terminal pathways of aromatic amino acid biosynthesis. This reaction introduces a second double bond into the aromatic ring system. This is Chorismate synthase from Azobacteroides pseudotrichonymphae genomovar. CFP2.